The chain runs to 877 residues: Kinetochore null protein 2 (877 aa).

In terms of domain architecture, SANTA spans 20 to 107; that stretch reads IRLNLWSMKF…SNGIPENWAD (88 aa). 3 disordered regions span residues 122–315, 338–535, and 549–604; these read RPIQ…SKSV, FEST…ESLN, and MMFG…NDSI. Positions 153–211 form a coiled coil; it reads QKNSENEKERNRREREEQQTKERERRLEEEKQRRDAEAEAERRRKEEEELEEANYTLRA. The span at 156 to 199 shows a compositional bias: basic and acidic residues; that stretch reads SENEKERNRREREEQQTKERERRLEEEKQRRDAEAEAERRRKEE. Positions 251 to 279 are enriched in polar residues; the sequence is IASSTPQQKQRLADGANNQIPPTQKSQDS. Composition is skewed to basic and acidic residues over residues 359–385, 394–444, and 453–480; these read EPRHRSSSRDGYEQSRYSQRYEHDNSR, RRHE…RGRD, and VRFEEEHRRHGDEYRDPRGPRDYNDYGR. Residues 491–549 adopt a coiled-coil conformation; it reads EDEEKLNAIVRREKELRNRLQKSQKASSSSYRHRSNSSDAEESLNEWDIENQELLDNSM. A compositionally biased stretch (low complexity) spans 511-520; the sequence is QKSQKASSSS. Residues 573-583 show a composition bias toward polar residues; sequence RSKPANSTKSP. Basic and acidic residues predominate over residues 592–601; it reads ASLEDNRDLN. One can recognise a Myb-like domain in the interval 617-678; that stretch reads VAKKITWRKQ…AITRLKWVEP (62 aa). Disordered regions lie at residues 757-785 and 808-877; these read RGGTRASIMPKPVEDSPMSRGNNSTFNSP and MQAR…TSIY. Polar residues-rich tracts occupy residues 775–785 and 819–836; these read SRGNNSTFNSP and SSSMNNSTYRGNKNTSIS. Positions 856–871 are enriched in acidic residues; it reads EDDENEDNDDDDDMRE.

Belongs to the KNL2 family. Interacts with hcp-3.

Its subcellular location is the nucleus. The protein resides in the chromosome. It localises to the centromere. The protein localises to the kinetochore. Its function is as follows. Required for the recruitment of hcp-3, hcp-4, knl-1, bub-1 and lin-53 to kinetochores, kinetochore assembly, chromosome condensation and chromosome segregation in meiosis and mitosis. This chain is Kinetochore null protein 2, found in Caenorhabditis elegans.